The following is a 253-amino-acid chain: Sulfate transporter CysZ (253 aa).

4 helical membrane-spanning segments follow: residues 31 to 51, 75 to 95, 151 to 171, and 222 to 242; these read FVIL…WWLF, LLWP…FSTI, IVLL…PVLW, and IPLL…AMWV.

The protein belongs to the CysZ family.

It is found in the cell inner membrane. High affinity, high specificity proton-dependent sulfate transporter, which mediates sulfate uptake. Provides the sulfur source for the cysteine synthesis pathway. The sequence is that of Sulfate transporter CysZ from Escherichia coli O7:K1 (strain IAI39 / ExPEC).